The following is a 448-amino-acid chain: Squalene synthase ERG9 (448 aa).

A helical membrane pass occupies residues 428-448 (CNVVLFGIGALILSLIYFVLY).

The protein belongs to the phytoene/squalene synthase family. It depends on Mg(2+) as a cofactor.

It is found in the endoplasmic reticulum membrane. Its subcellular location is the microsome. The enzyme catalyses 2 (2E,6E)-farnesyl diphosphate + NADPH + H(+) = squalene + 2 diphosphate + NADP(+). It catalyses the reaction 2 (2E,6E)-farnesyl diphosphate + NADH + H(+) = squalene + 2 diphosphate + NAD(+). The protein operates within terpene metabolism; lanosterol biosynthesis; lanosterol from farnesyl diphosphate: step 1/3. In terms of biological role, squalene synthase; part of the third module of ergosterol biosynthesis pathway that includes the late steps of the pathway. ERG9 produces squalene from 2 farnesyl pyrophosphate moieties. The third module or late pathway involves the ergosterol synthesis itself through consecutive reactions that mainly occur in the endoplasmic reticulum (ER) membrane. Firstly, the squalene synthase ERG9 catalyzes the condensation of 2 farnesyl pyrophosphate moieties to form squalene, which is the precursor of all steroids. Squalene synthase is crucial for balancing the incorporation of farnesyl diphosphate (FPP) into sterol and nonsterol isoprene synthesis. Secondly, the squalene epoxidase ERG1 catalyzes the stereospecific oxidation of squalene to (S)-2,3-epoxysqualene, which is considered to be a rate-limiting enzyme in steroid biosynthesis. Then, the lanosterol synthase ERG7 catalyzes the cyclization of (S)-2,3 oxidosqualene to lanosterol, a reaction that forms the sterol core. In the next steps, lanosterol is transformed to zymosterol through a complex process involving various demethylation, reduction and desaturation reactions. The lanosterol 14-alpha-demethylase ERG11 (also known as CYP51) catalyzes C14-demethylation of lanosterol to produce 4,4'-dimethyl cholesta-8,14,24-triene-3-beta-ol, which is critical for ergosterol biosynthesis. The C-14 reductase ERG24 reduces the C14=C15 double bond of 4,4-dimethyl-cholesta-8,14,24-trienol to produce 4,4-dimethyl-cholesta-8,24-dienol. 4,4-dimethyl-cholesta-8,24-dienol is substrate of the C-4 demethylation complex ERG25-ERG26-ERG27 in which ERG25 catalyzes the three-step monooxygenation required for the demethylation of 4,4-dimethyl and 4alpha-methylsterols, ERG26 catalyzes the oxidative decarboxylation that results in a reduction of the 3-beta-hydroxy group at the C-3 carbon to an oxo group, and ERG27 is responsible for the reduction of the keto group on the C-3. ERG28 has a role as a scaffold to help anchor ERG25, ERG26 and ERG27 to the endoplasmic reticulum and ERG29 regulates the activity of the iron-containing C4-methylsterol oxidase ERG25. Then, the sterol 24-C-methyltransferase ERG6 catalyzes the methyl transfer from S-adenosyl-methionine to the C-24 of zymosterol to form fecosterol. The C-8 sterol isomerase ERG2 catalyzes the reaction which results in unsaturation at C-7 in the B ring of sterols and thus converts fecosterol to episterol. The sterol-C5-desaturase ERG3 then catalyzes the introduction of a C-5 double bond in the B ring to produce 5-dehydroepisterol. The C-22 sterol desaturase ERG5 further converts 5-dehydroepisterol into ergosta-5,7,22,24(28)-tetraen-3beta-ol by forming the C-22(23) double bond in the sterol side chain. Finally, ergosta-5,7,22,24(28)-tetraen-3beta-ol is substrate of the C-24(28) sterol reductase ERG4 to produce ergosterol. This Candida albicans (strain SC5314 / ATCC MYA-2876) (Yeast) protein is Squalene synthase ERG9.